Consider the following 357-residue polypeptide: Peptide chain release factor 1 (357 aa).

The residue at position 234 (Gln-234) is an N5-methylglutamine. The segment at 284–304 (RIEGERSEDRKSKIGTGDRSE) is disordered.

Belongs to the prokaryotic/mitochondrial release factor family. Methylated by PrmC. Methylation increases the termination efficiency of RF1.

The protein resides in the cytoplasm. Functionally, peptide chain release factor 1 directs the termination of translation in response to the peptide chain termination codons UAG and UAA. In Pelagibacter ubique (strain HTCC1062), this protein is Peptide chain release factor 1.